Reading from the N-terminus, the 213-residue chain is Translation initiation factor IF-3 (213 aa).

Positions 178 to 213 (VKTLIKSEKPEKPEKPEKSEKTEKQGPSTPPAPSAS) are disordered. The span at 182-201 (IKSEKPEKPEKPEKSEKTEK) shows a compositional bias: basic and acidic residues.

Belongs to the IF-3 family. Monomer.

It is found in the cytoplasm. IF-3 binds to the 30S ribosomal subunit and shifts the equilibrium between 70S ribosomes and their 50S and 30S subunits in favor of the free subunits, thus enhancing the availability of 30S subunits on which protein synthesis initiation begins. In Solibacter usitatus (strain Ellin6076), this protein is Translation initiation factor IF-3.